A 211-amino-acid polypeptide reads, in one-letter code: tRNA (guanine-N(7)-)-methyltransferase (211 aa).

Residues aspartate 40, glutamate 65, asparagine 92, and aspartate 118 each coordinate S-adenosyl-L-methionine. Aspartate 118 is a catalytic residue. Substrate is bound by residues lysine 122 and aspartate 154.

Belongs to the class I-like SAM-binding methyltransferase superfamily. TrmB family.

The enzyme catalyses guanosine(46) in tRNA + S-adenosyl-L-methionine = N(7)-methylguanosine(46) in tRNA + S-adenosyl-L-homocysteine. The protein operates within tRNA modification; N(7)-methylguanine-tRNA biosynthesis. Functionally, catalyzes the formation of N(7)-methylguanine at position 46 (m7G46) in tRNA. The polypeptide is tRNA (guanine-N(7)-)-methyltransferase (Microcystis aeruginosa (strain NIES-843 / IAM M-2473)).